A 242-amino-acid polypeptide reads, in one-letter code: Terpene cyclase dpfgB (242 aa).

Transmembrane regions (helical) follow at residues 15–37, 51–71, 75–95, 112–132, 141–161, 169–189, and 205–225; these read DVAWIADTCKLLMGIGWTTNYVG, ALMALCCNFAWELTYALIYPF, LEMYVHFSGLMLNCGVMYTAV, LPLIFIICVSGFMSGHVALAA, AWSAYGCQLLLSVGGLCQLLC, SYFLWFSRFFGSLVLVPQDIL, and LYIWFVCIFLLLDGSYGICLW.

Belongs to the paxB family.

The protein resides in the membrane. It participates in secondary metabolite biosynthesis; terpenoid biosynthesis. In terms of biological role, terpene cyclase; part of the gene cluster that mediates the biosynthesis of diterpenoid pyrones. The first step of the pathway is the synthesis of the alpha-pyrone moiety by the polyketide synthase dpfgA via condensation of one acetyl-CoA starter unit with 3 malonyl-CoA units and 2 methylations. The alpha-pyrone is then combined with geranylgeranyl pyrophosphate (GGPP) formed by the GGPP synthase dpfgD through the action of the prenyltransferase dpfgC to yield a linear alpha-pyrone diterpenoid. Subsequent steps in the diterpenoid pyrone biosynthetic pathway involve the decalin core formation, which is initiated by the epoxidation of the C10-C11 olefin by the FAD-dependent oxidoreductase dpfgE, and is followed by a cyclization cascade catalyzed by the terpene cyclase dpfgB. The short chain dehydrogenase/reductase dpfgG then oxidizes the 8S hydroxy group to a ketone and the short chain dehydrogenase/reductase dpfgH reduces the ketone to the 8R hydroxy group to yield higginsianin B. Higginsianin B is further methylated by the methyltransferase dpfgI to produce the intermediate named FDDP B. The cytochrome P450 monooxygenase dfgpJ then catalyzes a three-step oxidation at C-27 to generate a carboxylic acid as well as C-26 hydroxylation. Finally, methyltransferase dpfgK methylates the carboxylic acid generated by dpfgJ, yielding the final diterpenoid pyrones from the pathway which were named FDDP D and FDDP E. The protein is Terpene cyclase dpfgB of Gibberella zeae (strain ATCC MYA-4620 / CBS 123657 / FGSC 9075 / NRRL 31084 / PH-1) (Wheat head blight fungus).